Consider the following 104-residue polypeptide: uncharacterized protein (104 aa).

Residues 77-98 traverse the membrane as a helical segment; that stretch reads IAAVRANIIICACFFYLFCYCS.

It localises to the membrane. This is an uncharacterized protein from Saccharomyces cerevisiae (strain ATCC 204508 / S288c) (Baker's yeast).